Consider the following 161-residue polypeptide: Nucleotide-binding protein AZOSEA28950 (161 aa).

It belongs to the YajQ family.

In terms of biological role, nucleotide-binding protein. The chain is Nucleotide-binding protein AZOSEA28950 from Aromatoleum aromaticum (strain DSM 19018 / LMG 30748 / EbN1) (Azoarcus sp. (strain EbN1)).